The primary structure comprises 366 residues: 3-isopropylmalate dehydrogenase (366 aa).

NAD(+) is bound at residue 76–89 (GPKWDHNPASLRPE). Residues Arg-96, Arg-106, Arg-134, and Asp-222 each coordinate substrate. 3 residues coordinate Mg(2+): Asp-222, Asp-246, and Asp-250. 280–292 (GSAPDIAGQGKAN) is a binding site for NAD(+).

It belongs to the isocitrate and isopropylmalate dehydrogenases family. LeuB type 1 subfamily. In terms of assembly, homodimer. It depends on Mg(2+) as a cofactor. The cofactor is Mn(2+).

It is found in the cytoplasm. It catalyses the reaction (2R,3S)-3-isopropylmalate + NAD(+) = 4-methyl-2-oxopentanoate + CO2 + NADH. Its pathway is amino-acid biosynthesis; L-leucine biosynthesis; L-leucine from 3-methyl-2-oxobutanoate: step 3/4. Catalyzes the oxidation of 3-carboxy-2-hydroxy-4-methylpentanoate (3-isopropylmalate) to 3-carboxy-4-methyl-2-oxopentanoate. The product decarboxylates to 4-methyl-2 oxopentanoate. The protein is 3-isopropylmalate dehydrogenase (leuB) of Heyndrickxia coagulans (Weizmannia coagulans).